Consider the following 313-residue polypeptide: Acetyl-coenzyme A carboxylase carboxyl transferase subunit alpha (313 aa).

Residues 34-288 form the CoA carboxyltransferase C-terminal domain; it reads KLKDQRDIAL…KNVVLEAVNE (255 aa).

The protein belongs to the AccA family. Acetyl-CoA carboxylase is a heterohexamer composed of biotin carboxyl carrier protein (AccB), biotin carboxylase (AccC) and two subunits each of ACCase subunit alpha (AccA) and ACCase subunit beta (AccD).

Its subcellular location is the cytoplasm. The enzyme catalyses N(6)-carboxybiotinyl-L-lysyl-[protein] + acetyl-CoA = N(6)-biotinyl-L-lysyl-[protein] + malonyl-CoA. It participates in lipid metabolism; malonyl-CoA biosynthesis; malonyl-CoA from acetyl-CoA: step 1/1. Its function is as follows. Component of the acetyl coenzyme A carboxylase (ACC) complex. First, biotin carboxylase catalyzes the carboxylation of biotin on its carrier protein (BCCP) and then the CO(2) group is transferred by the carboxyltransferase to acetyl-CoA to form malonyl-CoA. The chain is Acetyl-coenzyme A carboxylase carboxyl transferase subunit alpha from Fusobacterium nucleatum subsp. nucleatum (strain ATCC 25586 / DSM 15643 / BCRC 10681 / CIP 101130 / JCM 8532 / KCTC 2640 / LMG 13131 / VPI 4355).